The sequence spans 318 residues: NADH-ubiquinone oxidoreductase chain 1 (318 aa).

The next 8 helical transmembrane spans lie at 2-22 (FLIN…FLTL), 69-89 (FLFT…WAPL), 102-122 (LLFI…SGWA), 146-166 (MTTI…TAFA), 171-191 (HLWL…STLA), 222-242 (LFFM…VILF), 253-273 (EIST…FLWV), and 294-314 (LPLT…LACI).

The protein belongs to the complex I subunit 1 family. As to quaternary structure, core subunit of respiratory chain NADH dehydrogenase (Complex I) which is composed of 45 different subunits.

The protein localises to the mitochondrion inner membrane. It carries out the reaction a ubiquinone + NADH + 5 H(+)(in) = a ubiquinol + NAD(+) + 4 H(+)(out). Core subunit of the mitochondrial membrane respiratory chain NADH dehydrogenase (Complex I) which catalyzes electron transfer from NADH through the respiratory chain, using ubiquinone as an electron acceptor. Essential for the catalytic activity and assembly of complex I. The protein is NADH-ubiquinone oxidoreductase chain 1 (MT-ND1) of Elephas maximus (Indian elephant).